The following is a 220-amino-acid chain: FMN-dependent NADH:quinone oxidoreductase (220 aa).

FMN contacts are provided by residues Ser-10, 17–19 (SAS), and 136–139 (SRGG). Residues 200–220 (HSEAVTKAKELTERLTADNGR) form a disordered region.

The protein belongs to the azoreductase type 1 family. Homodimer. Requires FMN as cofactor.

The catalysed reaction is 2 a quinone + NADH + H(+) = 2 a 1,4-benzosemiquinone + NAD(+). It carries out the reaction N,N-dimethyl-1,4-phenylenediamine + anthranilate + 2 NAD(+) = 2-(4-dimethylaminophenyl)diazenylbenzoate + 2 NADH + 2 H(+). Its function is as follows. Quinone reductase that provides resistance to thiol-specific stress caused by electrophilic quinones. Also exhibits azoreductase activity. Catalyzes the reductive cleavage of the azo bond in aromatic azo compounds to the corresponding amines. The chain is FMN-dependent NADH:quinone oxidoreductase from Streptomyces coelicolor (strain ATCC BAA-471 / A3(2) / M145).